We begin with the raw amino-acid sequence, 421 residues long: tRNA(Ile)-lysidine synthase (421 aa).

26–31 (SGGADS) is a binding site for ATP.

The protein belongs to the tRNA(Ile)-lysidine synthase family.

Its subcellular location is the cytoplasm. It carries out the reaction cytidine(34) in tRNA(Ile2) + L-lysine + ATP = lysidine(34) in tRNA(Ile2) + AMP + diphosphate + H(+). Ligates lysine onto the cytidine present at position 34 of the AUA codon-specific tRNA(Ile) that contains the anticodon CAU, in an ATP-dependent manner. Cytidine is converted to lysidine, thus changing the amino acid specificity of the tRNA from methionine to isoleucine. In Streptococcus thermophilus (strain CNRZ 1066), this protein is tRNA(Ile)-lysidine synthase.